Here is a 187-residue protein sequence, read N- to C-terminus: Meiotically up-regulated gene 155 protein (187 aa).

The disordered stretch occupies residues 1 to 24 (MRPTSGCSKDDTIQKQNRRHNTVD). 2 consecutive transmembrane segments (helical) span residues 83–105 (IISY…PFSH) and 163–183 (VMLT…LFIF).

Its subcellular location is the cytoplasm. The protein resides in the nucleus membrane. Functionally, has a role in meiosis. This Schizosaccharomyces pombe (strain 972 / ATCC 24843) (Fission yeast) protein is Meiotically up-regulated gene 155 protein (mug155).